The chain runs to 216 residues: Large ribosomal subunit protein uL24m (216 aa).

A mitochondrion-targeting transit peptide spans 1–9 (MRLSALLAL). A Phosphoserine modification is found at S24. The region spanning 56–89 (LFCGDMVEILEGKDAGKQGKVVQVVRQRNWVVLE) is the KOW domain.

Belongs to the universal ribosomal protein uL24 family. As to quaternary structure, component of the mitochondrial ribosome large subunit (39S) which comprises a 16S rRNA and about 50 distinct proteins.

Its subcellular location is the mitochondrion. In Mus musculus (Mouse), this protein is Large ribosomal subunit protein uL24m (Mrpl24).